The primary structure comprises 289 residues: ATP synthase gamma chain (289 aa).

It belongs to the ATPase gamma chain family. In terms of assembly, F-type ATPases have 2 components, CF(1) - the catalytic core - and CF(0) - the membrane proton channel. CF(1) has five subunits: alpha(3), beta(3), gamma(1), delta(1), epsilon(1). CF(0) has three main subunits: a, b and c.

The protein localises to the cell membrane. In terms of biological role, produces ATP from ADP in the presence of a proton gradient across the membrane. The gamma chain is believed to be important in regulating ATPase activity and the flow of protons through the CF(0) complex. This is ATP synthase gamma chain from Hamiltonella defensa subsp. Acyrthosiphon pisum (strain 5AT).